The primary structure comprises 294 residues: Nucleotide-binding protein Cbei_4857 (294 aa).

8–15 serves as a coordination point for ATP; it reads GLSGAGKT. Position 59–62 (59–62) interacts with GTP; the sequence is DIRG.

This sequence belongs to the RapZ-like family.

Displays ATPase and GTPase activities. The protein is Nucleotide-binding protein Cbei_4857 of Clostridium beijerinckii (strain ATCC 51743 / NCIMB 8052) (Clostridium acetobutylicum).